The following is a 485-amino-acid chain: Rhamnulokinase (485 aa).

Residue 12-16 (ATSGR) coordinates ATP. Substrate is bound by residues Gly-80 and 238–240 (HDT). The active-site Proton acceptor is Asp-239. Thr-261 is an ATP binding site. Asn-298 provides a ligand contact to substrate. ATP is bound at residue Glu-306. The cysteines at positions 355 and 372 are disulfide-linked. Gly-404 is a binding site for ATP.

This sequence belongs to the rhamnulokinase family. Requires Mg(2+) as cofactor.

The enzyme catalyses L-rhamnulose + ATP = L-rhamnulose 1-phosphate + ADP + H(+). It participates in carbohydrate degradation; L-rhamnose degradation; glycerone phosphate from L-rhamnose: step 2/3. Its function is as follows. Involved in the catabolism of L-rhamnose (6-deoxy-L-mannose). Catalyzes the transfer of the gamma-phosphate group from ATP to the 1-hydroxyl group of L-rhamnulose to yield L-rhamnulose 1-phosphate. The polypeptide is Rhamnulokinase (Bacteroides thetaiotaomicron (strain ATCC 29148 / DSM 2079 / JCM 5827 / CCUG 10774 / NCTC 10582 / VPI-5482 / E50)).